A 512-amino-acid chain; its full sequence is PTS system mannitol-specific EIICB component (512 aa).

Topologically, residues 1-28 (MSQTEEKKGIGRRVQAFGSFLSSMIMPN) are cytoplasmic. A PTS EIIC type-2 domain is found at 17–349 (FGSFLSSMIM…MKFTKEPKQD (333 aa)). Residues 29-50 (IGAFIAWGFIAAIFIDNGWFPN) form a helical membrane-spanning segment. Topologically, residues 51 to 54 (KDLA) are extracellular. A helical transmembrane segment spans residues 55–75 (TLAGPMITYLIPLLIAFSGGR). Over 76-139 (LIYDLRGGII…QGFEMLFNNF (64 aa)) the chain is Cytoplasmic. A helical transmembrane segment spans residues 140–161 (SAGILGFIMTIAGFKILAPLMK). Residues 162 to 170 (FIMHILSVA) lie on the Extracellular side of the membrane. A helical membrane pass occupies residues 171–191 (VEALVHAHLLPLVSILVEPAK). The Cytoplasmic portion of the chain corresponds to 192–278 (IVFLNNAINH…VLMRPLLFIA (87 aa)). A helical transmembrane segment spans residues 279–298 (VILGGMTGVATYQATGFGFK). At 299 to 318 (SPASPGSFIVYCLNAPRGEF) the chain is on the extracellular side. A helical transmembrane segment spans residues 319–340 (LHMLLGVFLATLVSFVVAALIM). At 341–512 (KFTKEPKQDL…LNNLKKDDQA (172 aa)) the chain is on the cytoplasmic side. A compositionally biased stretch (low complexity) spans 365 to 376 (SSVASKLVSSDK). Residues 365–401 (SSVASKLVSSDKNVNTEENASGNVSETSSLDDDPEAL) form a disordered region. The span at 380–392 (TEENASGNVSETS) shows a compositional bias: polar residues. The PTS EIIB type-2 domain occupies 419-512 (NHVIFACDAG…LNNLKKDDQA (94 aa)). C425 serves as the catalytic Phosphocysteine intermediate; for EIIB activity. Phosphocysteine; by EIIA is present on C425.

In terms of assembly, homodimer.

It localises to the cell membrane. It carries out the reaction D-mannitol(out) + N(pros)-phospho-L-histidyl-[protein] = D-mannitol 1-phosphate(in) + L-histidyl-[protein]. Its function is as follows. The phosphoenolpyruvate-dependent sugar phosphotransferase system (sugar PTS), a major carbohydrate active transport system, catalyzes the phosphorylation of incoming sugar substrates concomitantly with their translocation across the cell membrane. The enzyme II CmtAB PTS system is involved in D-mannitol transport. This is PTS system mannitol-specific EIICB component (mtlA) from Staphylococcus aureus (strain MRSA252).